A 305-amino-acid polypeptide reads, in one-letter code: Ribonuclease BN (305 aa).

Zn(2+) is bound by residues His64, His66, Asp68, His69, His141, Asp212, and His270. Asp68 functions as the Proton acceptor in the catalytic mechanism.

The protein belongs to the RNase Z family. RNase BN subfamily. In terms of assembly, homodimer. Zn(2+) serves as cofactor.

Its function is as follows. Zinc phosphodiesterase, which has both exoribonuclease and endoribonuclease activities. The sequence is that of Ribonuclease BN from Salmonella agona (strain SL483).